The chain runs to 352 residues: Selenide, water dikinase (352 aa).

Cys-23 is an active-site residue. ATP-binding positions include Lys-26 and 54 to 56; that span reads SRD. Asp-57 provides a ligand contact to Mg(2+). Residues Asp-74, Asp-97, and 145–147 each bind ATP; that span reads GHS. A Mg(2+)-binding site is contributed by Asp-97. Asp-233 contributes to the Mg(2+) binding site.

Belongs to the selenophosphate synthase 1 family. Class I subfamily. Homodimer. Requires Mg(2+) as cofactor.

The enzyme catalyses hydrogenselenide + ATP + H2O = selenophosphate + AMP + phosphate + 2 H(+). Its function is as follows. Synthesizes selenophosphate from selenide and ATP. In Shewanella baltica (strain OS155 / ATCC BAA-1091), this protein is Selenide, water dikinase.